Here is a 230-residue protein sequence, read N- to C-terminus: Urease accessory protein UreE (230 aa).

A disordered region spans residues 197–230 (LHIHAIHSHGDGDSHNHDHDHSHSHGDHDHDHKH). Basic and acidic residues predominate over residues 204–230 (SHGDGDSHNHDHDHSHSHGDHDHDHKH).

The protein belongs to the UreE family.

Its subcellular location is the cytoplasm. Functionally, involved in urease metallocenter assembly. Binds nickel. Probably functions as a nickel donor during metallocenter assembly. The sequence is that of Urease accessory protein UreE from Yersinia aldovae.